We begin with the raw amino-acid sequence, 171 residues long: Inosine/xanthosine triphosphatase (171 aa).

8–13 contributes to the substrate binding site; it reads TTNPAK. 2 residues coordinate Mg(2+): glutamate 38 and glutamate 68. 68–69 provides a ligand contact to substrate; that stretch reads EA.

Belongs to the YjjX NTPase family. Homodimer. The cofactor is Mg(2+). Mn(2+) serves as cofactor.

It catalyses the reaction XTP + H2O = XDP + phosphate + H(+). It carries out the reaction ITP + H2O = IDP + phosphate + H(+). In terms of biological role, phosphatase that hydrolyzes non-canonical purine nucleotides such as XTP and ITP to their respective diphosphate derivatives. Probably excludes non-canonical purines from DNA/RNA precursor pool, thus preventing their incorporation into DNA/RNA and avoiding chromosomal lesions. This Salmonella arizonae (strain ATCC BAA-731 / CDC346-86 / RSK2980) protein is Inosine/xanthosine triphosphatase (yjjX).